A 374-amino-acid chain; its full sequence is Putative C-&gt;U-editing enzyme APOBEC-4 (374 aa).

One can recognise a CMP/dCMP-type deaminase domain in the interval 60 to 176 (PQTKHLTFYE…AWNRKALQSL (117 aa)). Position 92 (His92) interacts with Zn(2+). Glu94 functions as the Proton donor in the catalytic mechanism. Residues Cys126 and Cys133 each contribute to the Zn(2+) site. A disordered region spans residues 259–280 (EKHPLGSAAPAQRQPTRGQDPR).

It belongs to the cytidine and deoxycytidylate deaminase family. Requires Zn(2+) as cofactor. In terms of tissue distribution, predominantly expressed in testis.

Putative C to U editing enzyme whose physiological substrate is not yet known. The sequence is that of Putative C-&gt;U-editing enzyme APOBEC-4 (Apobec4) from Mus musculus (Mouse).